The following is a 94-amino-acid chain: Signal peptidase complex subunit 1 (94 aa).

Serine 2 is subject to N-acetylserine. Over 2–28 (SEILQDVQRKLVFPIDFPSQRKTEKFQ) the chain is Cytoplasmic. A helical membrane pass occupies residues 29–49 (QLSLMIGALVACILGFAQQSL). Residue lysine 50 is a topological domain, lumenal. A helical membrane pass occupies residues 51–71 (VLLTAYGISCVITLICVLPAY). The Cytoplasmic portion of the chain corresponds to 72–94 (PWYNKQKLRWAQPKIEINVDQYD).

Belongs to the SPCS1 family. In terms of assembly, component of the signal peptidase complex (SPC) composed of a catalytic subunit SEC11 and three accessory subunits SPC1, SPC2 and SPC3. The complex induces a local thinning of the ER membrane which is used to measure the length of the signal peptide (SP) h-region of protein substrates. This ensures the selectivity of the complex towards h-regions shorter than 18-20 amino acids. SPC associates with the translocon complex. Interacts with SBH1 and SEB2/SBH2.

Its subcellular location is the endoplasmic reticulum membrane. In terms of biological role, component of the signal peptidase complex (SPC) which catalyzes the cleavage of N-terminal signal sequences from nascent proteins as they are translocated into the lumen of the endoplasmic reticulum. Dispensable for SPC enzymatic activity. The polypeptide is Signal peptidase complex subunit 1 (SPC1) (Saccharomyces cerevisiae (strain ATCC 204508 / S288c) (Baker's yeast)).